We begin with the raw amino-acid sequence, 240 residues long: MSKPKYNRVVLKLSGEALAGEQGFGINPAVIKSVAEQVKEIAELDVEVAVVVGGGNIWRGKIGSEMGMDRAGADYMGMLATVMNSLALQDSLENIGIQTRVQTSIEMRQVAEPYIRRKAVRHLEKKRVVIFAAGTGNPYFSTDTTAALRAAEIEADVILMAKNNVDGVYNADPSIDPTATKYETLTYLDVLKEGLGVMDSTASSLCMDNDIPLIVFSVMEKGNIKRAVLGENIGTVVRGK.

Residue Lys12–Gly15 participates in ATP binding. The interval Gly20–Gly25 is involved in allosteric activation by GTP. Position 54 (Gly54) interacts with UMP. Residues Gly55 and Arg59 each contribute to the ATP site. UMP contacts are provided by residues Asp74 and Thr135–Thr142. Residues Asn163, Tyr169, and Asp172 each coordinate ATP.

It belongs to the UMP kinase family. In terms of assembly, homohexamer.

It is found in the cytoplasm. The catalysed reaction is UMP + ATP = UDP + ADP. Its pathway is pyrimidine metabolism; CTP biosynthesis via de novo pathway; UDP from UMP (UMPK route): step 1/1. Its activity is regulated as follows. Allosterically activated by GTP. Inhibited by UTP. Its function is as follows. Catalyzes the reversible phosphorylation of UMP to UDP. This is Uridylate kinase from Bacillus anthracis.